We begin with the raw amino-acid sequence, 98 residues long: Cysteine-rich and transmembrane domain-containing protein WIH2 (98 aa).

Positions M1–S77 are disordered. Residues V9–G21 show a composition bias toward pro residues. The span at Y37–Q55 shows a compositional bias: low complexity. Pro residues predominate over residues G56–Q70. A helical transmembrane segment spans residues Q75–C92.

This sequence belongs to the CYSTM1 family. In terms of tissue distribution, expressed in floral organ primordia.

The protein resides in the membrane. Its function is as follows. Required for the promotion of megasporogenesis, or promotion of germ cell formation from somatic precursor cells. Acts redundantly with WIH1. Functions in a genetic pathway downstream of SPL/NZZ and WUS and together with TRN2 in promoting megasporogenesis. This is Cysteine-rich and transmembrane domain-containing protein WIH2 from Arabidopsis thaliana (Mouse-ear cress).